The following is a 191-amino-acid chain: Small ribosomal subunit protein uS5 (191 aa).

A disordered region spans residues 1-21 (MAAERERGGRERSREREERDS). In terms of domain architecture, S5 DRBM spans 23 to 86 (FVDKLVHINR…ESAKRNLTRV (64 aa)).

In terms of assembly, part of the 30S ribosomal subunit. Contacts proteins S4 and S8.

Its function is as follows. With S4 and S12 plays an important role in translational accuracy. In terms of biological role, located at the back of the 30S subunit body where it stabilizes the conformation of the head with respect to the body. This is Small ribosomal subunit protein uS5 from Rhodopseudomonas palustris (strain ATCC BAA-98 / CGA009).